Here is a 296-residue protein sequence, read N- to C-terminus: Acetylglutamate kinase (296 aa).

Substrate is bound by residues 69–70, Arg-91, and Asn-193; that span reads GG.

It belongs to the acetylglutamate kinase family. ArgB subfamily.

The protein localises to the cytoplasm. The catalysed reaction is N-acetyl-L-glutamate + ATP = N-acetyl-L-glutamyl 5-phosphate + ADP. The protein operates within amino-acid biosynthesis; L-arginine biosynthesis; N(2)-acetyl-L-ornithine from L-glutamate: step 2/4. Catalyzes the ATP-dependent phosphorylation of N-acetyl-L-glutamate. The protein is Acetylglutamate kinase of Verminephrobacter eiseniae (strain EF01-2).